The following is a 289-amino-acid chain: Oxaloacetate decarboxylase (289 aa).

Ser50 contributes to the substrate binding site. Mg(2+) is bound at residue Asp88. Substrate is bound by residues Arg159 and His235.

Belongs to the isocitrate lyase/PEP mutase superfamily. Oxaloacetate decarboxylase family. In terms of assembly, homotetramer; dimer of dimers. It depends on Mg(2+) as a cofactor.

The catalysed reaction is oxaloacetate + H(+) = pyruvate + CO2. Its function is as follows. Catalyzes the decarboxylation of oxaloacetate into pyruvate. Seems to play a role in maintaining cellular concentrations of bicarbonate and pyruvate. In Pseudomonas savastanoi pv. phaseolicola (strain 1448A / Race 6) (Pseudomonas syringae pv. phaseolicola (strain 1448A / Race 6)), this protein is Oxaloacetate decarboxylase.